The chain runs to 951 residues: MEHSRGDSVEAGEEEEGRGGWDSRSAGTFSSSCTDCSSYCSSDLEPEWLDRVQKNGELFYLELSEGEEEILLPLSPLEPVGVNHVRFSDNEAEILPEDRKNVRKNSEPRFRKLAKMLKKKNNKKGSAELNRQACPTSILKQNSRQKPGIIVHYQYRDTCLYVNPDHLPEDEHKKTSNLLQALIGIVHQSSRNSKRSERQGRQESNQRLSNQEKLVVHGFIPGSPAIRCGQVLIGDTLVAVNDVEVHVENIERVLSCIPGPMQLKLTFETPVLYSGMGLKNQNNQAQTSINDLASLVWGDEHTNSQQDLQHMPHIVMYLTLRLDSETSKEEQEILYQYPVSDASHKLKSIRGLFLTLGDMLQNVTGAPIVSSSLILNGELVHVSYWKENDKLFLISVPAQRFPLLQLKNVTADLVRTLKFMYSTLDRAFCQAENISRLDHFFSLFFQRVLRVFLLSGITGYGPQFYDACSSLLVENLPGVRWLSLPEDIKIQIDTVLSDLEALDFAELSEDYYEMRRLYMIIGTCIFYKGYLLSNHLPKEDLVDVVLYCRQYCLLALASERIGQLIIWREVYPRYHLKHCGSPATEECSEPGGRYFLLIVGLKHFMLCTLLEAGGCTSKATGNPGPDYIYVDQVKATLLQLEMLDLNLEERLGSAPNPCLSCADWFLPSARDKLGNFTSSIVLNKLQTPKRTTSPVSKRRLFAEAASSLRTRRPSPTRSSGGSDSGTDGAGESVGVITHSSPDMARKFGRRESLGSGGSDGSGGSGTLLKINKKKYSLPNPFSSASLRKNLSERETDDIYNTIKLTSGPENTLFHYLYFETLQGVFISPTHKEVEQLGGSIHPQLIKNFHRCCLSIRSVFQQALNKKNSKHSDSKACVDVAGFDPIKEHGVLFECSPENWNDQKKSPPTMSYWVVGRLFMHPQPQELYVCFHDSVTEISVELAFKLSFGIPL.

Disordered regions lie at residues M1–S32, S189–L208, and T687–G765. The PDZ domain maps to H187 to T269. Positions P715–T726 are enriched in low complexity. A compositionally biased stretch (basic and acidic residues) spans M743–S752. A compositionally biased stretch (gly residues) spans G754–G765.

It belongs to the inturned family. As to quaternary structure, interacts with fuz and wdpcp; fuz, intu and wdpcp probably form the core CPLANE (ciliogenesis and planar polarity effectors) complex. In terms of tissue distribution, expressed in the neural plate during neural tube closure with subsequent strong expression in the ventral neural tube and in facial mesenchyme.

Its subcellular location is the cell surface. It localises to the cell membrane. The protein localises to the cytoplasm. It is found in the cytoskeleton. The protein resides in the cilium basal body. Plays a role in the definition of cell polarity via the planar cell polarity (PCP) cascade. Required for ciliogenesis by controlling the organization of the apical actin cytoskeleton and the positioning of the basal bodies at the apical cell surface, which in turn is essential for the normal orientation of elongating ciliary microtubules. Proposed to function as core component of a functional module called CPLANE (ciliogenesis and planar polarity effectors) involved in recruitment of peripheral IFT-A proteins to basal bodies. Controls the localization of both rhoa and disheveled in multi-ciliated cells. Has an indirect effect on hedgehog signaling. The polypeptide is Protein inturned (Xenopus laevis (African clawed frog)).